A 372-amino-acid chain; its full sequence is Queuine tRNA-ribosyltransferase (372 aa).

Asp-92 functions as the Proton acceptor in the catalytic mechanism. Residues 92–96 (DSGGY), Asp-146, Gln-188, and Gly-215 each bind substrate. The interval 246 to 252 (GIGSLKE) is RNA binding. The active-site Nucleophile is the Asp-265. The RNA binding; important for wobble base 34 recognition stretch occupies residues 270–274 (TRLGR). Zn(2+) contacts are provided by Cys-303, Cys-305, Cys-308, and His-334.

It belongs to the queuine tRNA-ribosyltransferase family. Homodimer. Within each dimer, one monomer is responsible for RNA recognition and catalysis, while the other monomer binds to the replacement base PreQ1. Zn(2+) serves as cofactor.

The catalysed reaction is 7-aminomethyl-7-carbaguanine + guanosine(34) in tRNA = 7-aminomethyl-7-carbaguanosine(34) in tRNA + guanine. The protein operates within tRNA modification; tRNA-queuosine biosynthesis. Catalyzes the base-exchange of a guanine (G) residue with the queuine precursor 7-aminomethyl-7-deazaguanine (PreQ1) at position 34 (anticodon wobble position) in tRNAs with GU(N) anticodons (tRNA-Asp, -Asn, -His and -Tyr). Catalysis occurs through a double-displacement mechanism. The nucleophile active site attacks the C1' of nucleotide 34 to detach the guanine base from the RNA, forming a covalent enzyme-RNA intermediate. The proton acceptor active site deprotonates the incoming PreQ1, allowing a nucleophilic attack on the C1' of the ribose to form the product. After dissociation, two additional enzymatic reactions on the tRNA convert PreQ1 to queuine (Q), resulting in the hypermodified nucleoside queuosine (7-(((4,5-cis-dihydroxy-2-cyclopenten-1-yl)amino)methyl)-7-deazaguanosine). This Prochlorococcus marinus (strain MIT 9515) protein is Queuine tRNA-ribosyltransferase.